Reading from the N-terminus, the 555-residue chain is Probable apyrase 6 (555 aa).

Basic residues predominate over residues 1–10 (MRRSHARSRV). The interval 1–45 (MRRSHARSRVKNSSSSKSDMDPIKFQIRSGNRAPSSSSTYTLTKP) is disordered. At 1-55 (MRRSHARSRVKNSSSSKSDMDPIKFQIRSGNRAPSSSSTYTLTKPNSKHAKSNLL) the chain is on the cytoplasmic side. The span at 28-45 (RSGNRAPSSSSTYTLTKP) shows a compositional bias: polar residues. Residues 56–76 (LTVGSISVVLGVLFLCYSILF) form a helical membrane-spanning segment. The Extracellular portion of the chain corresponds to 77–512 (SGGNLRGSLR…HALFSNHPKT (436 aa)). 89–99 (VVIDGGSTGTR) contributes to the ATP binding site. The Proton acceptor role is filled by glutamate 212. ATP is bound at residue 236–246 (GIVELGGASAQ). Residues asparagine 267 and asparagine 348 are each glycosylated (N-linked (GlcNAc...) asparagine). Residues 513 to 533 (LHYLIGIPILMTVLVYLVTKW) form a helical membrane-spanning segment. Over 534-555 (RKPQLKTIYDLEKGRYIVTRIR) the chain is Cytoplasmic.

The protein belongs to the GDA1/CD39 NTPase family. Requires Ca(2+) as cofactor. In terms of tissue distribution, detected in mature pollen grains (at the protein level). Also expressed in the veins and hydathode regions of rosette leaves.

The protein localises to the cytoplasmic vesicle membrane. It carries out the reaction a ribonucleoside 5'-triphosphate + 2 H2O = a ribonucleoside 5'-phosphate + 2 phosphate + 2 H(+). Functionally, catalyzes the hydrolysis of phosphoanhydride bonds of nucleoside tri- and di-phosphates. Involved in the regulation of pollen and anther development. The sequence is that of Probable apyrase 6 (APY6) from Arabidopsis thaliana (Mouse-ear cress).